Reading from the N-terminus, the 118-residue chain is MARVKKAMNARKKHKKILKLAKGFRGSRSKLYRPANTFVMKALKNAYIGRKLKKRDFRKLWIQRINAAARMNGISYSRLMNGLKLSGVEVNRKMLSEMAIQDPEGFAKLAEVAKAKLA.

The protein belongs to the bacterial ribosomal protein bL20 family.

In terms of biological role, binds directly to 23S ribosomal RNA and is necessary for the in vitro assembly process of the 50S ribosomal subunit. It is not involved in the protein synthesizing functions of that subunit. In Clostridioides difficile (strain 630) (Peptoclostridium difficile), this protein is Large ribosomal subunit protein bL20.